A 316-amino-acid polypeptide reads, in one-letter code: Phosphatidylglycerol--prolipoprotein diacylglyceryl transferase (316 aa).

Transmembrane regions (helical) follow at residues 18–38, 47–67, and 95–115; these read PIPIRAYAMCIIAGIIVAIWL, GGNPEIVLDAAIVAVPAGIIG, and NGGLGIWGAVILGGLAVAVFF. An a 1,2-diacyl-sn-glycero-3-phospho-(1'-sn-glycerol)-binding site is contributed by Arg141. 2 helical membrane passes run 188-208 and 251-271; these read VHPTFLYELLWNLLIFALLMW and INTIVSAVVFAGAIIVFFLLK. The tract at residues 292–316 is disordered; that stretch reads AVASPDGKPLPKAGEGIDGETPSTR.

This sequence belongs to the Lgt family.

The protein localises to the cell membrane. It carries out the reaction L-cysteinyl-[prolipoprotein] + a 1,2-diacyl-sn-glycero-3-phospho-(1'-sn-glycerol) = an S-1,2-diacyl-sn-glyceryl-L-cysteinyl-[prolipoprotein] + sn-glycerol 1-phosphate + H(+). It participates in protein modification; lipoprotein biosynthesis (diacylglyceryl transfer). Catalyzes the transfer of the diacylglyceryl group from phosphatidylglycerol to the sulfhydryl group of the N-terminal cysteine of a prolipoprotein, the first step in the formation of mature lipoproteins. This chain is Phosphatidylglycerol--prolipoprotein diacylglyceryl transferase, found in Corynebacterium glutamicum (strain ATCC 13032 / DSM 20300 / JCM 1318 / BCRC 11384 / CCUG 27702 / LMG 3730 / NBRC 12168 / NCIMB 10025 / NRRL B-2784 / 534).